The following is a 757-amino-acid chain: 5-methyltetrahydropteroyltriglutamate--homocysteine methyltransferase (757 aa).

5-methyltetrahydropteroyltri-L-glutamate is bound by residues 16–19 and lysine 112; that span reads RELK. L-homocysteine-binding positions include 432 to 434 and glutamate 485; that span reads IGS. L-methionine-binding positions include 432 to 434 and glutamate 485; that span reads IGS. 5-methyltetrahydropteroyltri-L-glutamate is bound by residues 516 to 517 and tryptophan 562; that span reads RC. Position 600 (aspartate 600) interacts with L-homocysteine. Position 600 (aspartate 600) interacts with L-methionine. Residue glutamate 606 participates in 5-methyltetrahydropteroyltri-L-glutamate binding. Zn(2+) is bound by residues histidine 642, cysteine 644, and glutamate 666. The active-site Proton donor is the histidine 695. A Zn(2+)-binding site is contributed by cysteine 727.

It belongs to the vitamin-B12 independent methionine synthase family. Requires Zn(2+) as cofactor.

The catalysed reaction is 5-methyltetrahydropteroyltri-L-glutamate + L-homocysteine = tetrahydropteroyltri-L-glutamate + L-methionine. It participates in amino-acid biosynthesis; L-methionine biosynthesis via de novo pathway; L-methionine from L-homocysteine (MetE route): step 1/1. In terms of biological role, catalyzes the transfer of a methyl group from 5-methyltetrahydrofolate to homocysteine resulting in methionine formation. The sequence is that of 5-methyltetrahydropteroyltriglutamate--homocysteine methyltransferase from Actinobacillus pleuropneumoniae serotype 7 (strain AP76).